The sequence spans 264 residues: Signal peptidase I (264 aa).

At 1–18 (MNRDNINSNKTVKQEFGS) the chain is on the cytoplasmic side. A helical transmembrane segment spans residues 19–39 (FAFVICIALVIRILIMEPFTV). At 40 to 264 (PTGSMKATIL…IFKNLYNVDE (225 aa)) the chain is on the extracellular side. Residues S43 and K106 contribute to the active site.

Belongs to the peptidase S26 family.

Its subcellular location is the cell membrane. The catalysed reaction is Cleavage of hydrophobic, N-terminal signal or leader sequences from secreted and periplasmic proteins.. The protein is Signal peptidase I (lepB) of Rickettsia prowazekii (strain Madrid E).